We begin with the raw amino-acid sequence, 325 residues long: UPF0285 protein MA_3856 (325 aa).

It belongs to the UPF0285 family.

The sequence is that of UPF0285 protein MA_3856 from Methanosarcina acetivorans (strain ATCC 35395 / DSM 2834 / JCM 12185 / C2A).